A 237-amino-acid chain; its full sequence is F-box only protein 50 (237 aa).

The FBA domain maps to 31 to 231 (VFETKPFERN…VTDSSVIVKA (201 aa)). The disordered stretch occupies residues 40-82 (NLLQNPSPYGVNHTVPPPEPHRSGIPPPSDRPPQLEPEGNFSG). Positions 64 to 74 (IPPPSDRPPQL) are enriched in pro residues.

Expressed in nonspecific cytotoxic cells (NCC).

It localises to the cytoplasm. In terms of biological role, may promote cell proliferation. The sequence is that of F-box only protein 50 (nccrp1) from Danio rerio (Zebrafish).